Consider the following 127-residue polypeptide: Small ribosomal subunit protein uS12 (127 aa).

Position 89 is a 3-methylthioaspartic acid (Asp-89).

The protein belongs to the universal ribosomal protein uS12 family. In terms of assembly, part of the 30S ribosomal subunit. Contacts proteins S8 and S17. May interact with IF1 in the 30S initiation complex.

With S4 and S5 plays an important role in translational accuracy. Functionally, interacts with and stabilizes bases of the 16S rRNA that are involved in tRNA selection in the A site and with the mRNA backbone. Located at the interface of the 30S and 50S subunits, it traverses the body of the 30S subunit contacting proteins on the other side and probably holding the rRNA structure together. The combined cluster of proteins S8, S12 and S17 appears to hold together the shoulder and platform of the 30S subunit. This is Small ribosomal subunit protein uS12 from Campylobacter lari (strain RM2100 / D67 / ATCC BAA-1060).